Reading from the N-terminus, the 541-residue chain is Tegument protein UL21 homolog (541 aa).

This sequence belongs to the alphaherpesvirinae UL21 protein family. In terms of assembly, interacts (via C-terminus) with UL16.

It is found in the virion tegument. It localises to the host cytoplasm. The protein resides in the host nucleus. Its function is as follows. May participate in DNA packaging/capsid maturation events. Promotes efficient incorporation of tegument proteins UL46, UL49, and US3 homologs into virions. May also play a role in capsid transport to the trans-Golgi network (TGN). The sequence is that of Tegument protein UL21 homolog from Varicella-zoster virus (strain Oka vaccine) (HHV-3).